The following is a 120-amino-acid chain: Large ribosomal subunit protein bL17 (120 aa).

The protein belongs to the bacterial ribosomal protein bL17 family. In terms of assembly, part of the 50S ribosomal subunit. Contacts protein L32.

The sequence is that of Large ribosomal subunit protein bL17 from Mesomycoplasma hyopneumoniae (strain 232) (Mycoplasma hyopneumoniae).